The sequence spans 938 residues: Mediator of RNA polymerase II transcription subunit 16 (938 aa).

This sequence belongs to the Mediator complex subunit 16 family. As to quaternary structure, component of the Mediator complex.

It is found in the nucleus. Functionally, component of the Mediator complex, a coactivator involved in the regulated transcription of nearly all RNA polymerase II-dependent genes. Mediator functions as a bridge to convey information from gene-specific regulatory proteins to the basal RNA polymerase II transcription machinery. Mediator is recruited to promoters by direct interactions with regulatory proteins and serves as a scaffold for the assembly of a functional preinitiation complex with RNA polymerase II and the general transcription factors. The chain is Mediator of RNA polymerase II transcription subunit 16 (SIN4) from Eremothecium gossypii (strain ATCC 10895 / CBS 109.51 / FGSC 9923 / NRRL Y-1056) (Yeast).